The chain runs to 527 residues: MDLSLSGGDFRFAFNNVNFSDRLLRIEITQSSGEGEVICSSIVDWARDRKRRREDVTNHTNDATCHVESDLNKNSCEIVNENSNNKTQVLVTAAEQEPKSGGEDENERLTNNNTSVLSVQELHISSAILAAKSPFFYKLFSNGMLESEQKQMTLKIDASEETAVMELLKFMYSNSLSVTASSALLDVLMVADKFEVASCMKYCSQLLLKMPMTLESSLLLLDLPSSLLMADSVKPLTNAARQFIASRYKNMSKITMEELMALPLVGIEAILASDGLEIQSEDVVYEVVLKWVKSHYSVLEARQEVLGSHLARYIRFPHMTTDRLKKILTSNDFRPSVASKLVVEALFFKTESLAHQHVLLAHEQPASTSRRFAKRAYVHRPIKIVEFAVPRPQCIIYLDLKRKECESIYPSSRISSQQFTLGGQGFFLSAQCNMDHLCLIHCFGLFIGMQENGSASASVTVDYDFSVRSKPTMEFVGKFKGIYTFTRGKAVGCRNLLGIPWDIFTAKNCPYFINDVLHLRADLSIRL.

Residues 111 to 180 (NNNTSVLSVQ…MYSNSLSVTA (70 aa)) enclose the BTB domain. In terms of domain architecture, BACK spans 233-327 (VKPLTNAARQ…HMTTDRLKKI (95 aa)).

It functions in the pathway protein modification; protein ubiquitination. Its function is as follows. May act as a substrate-specific adapter of an E3 ubiquitin-protein ligase complex (CUL3-RBX1-BTB) which mediates the ubiquitination and subsequent proteasomal degradation of target proteins. In Arabidopsis thaliana (Mouse-ear cress), this protein is BTB/POZ domain-containing protein At4g01160.